Consider the following 183-residue polypeptide: uncharacterized protein (183 aa).

Belongs to the asfivirus S183L family.

This is an uncharacterized protein from African swine fever virus (isolate Pig/Kenya/KEN-50/1950) (ASFV).